The chain runs to 90 residues: Barrier-to-autointegration factor-like protein (90 aa).

Homodimer. Heterodimerizes with BANF1.

It is found in the nucleus. Its subcellular location is the cytoplasm. Functionally, may play a role in BANF1 regulation and influence tissue-specific roles of BANF1. The protein is Barrier-to-autointegration factor-like protein (Banf2) of Mus musculus (Mouse).